A 67-amino-acid chain; its full sequence is Neurotoxin Cex10 (67 aa).

Residues 1 to 65 form the LCN-type CS-alpha/beta domain; that stretch reads KDGYLVEVTG…TWPLPNKSCG (65 aa). Disulfide bonds link Cys11/Cys64, Cys15/Cys40, Cys24/Cys45, and Cys28/Cys47. Cys64 is subject to Cysteine amide. A propeptide spanning residues 65 to 67 is cleaved from the precursor; the sequence is GKK.

It belongs to the long (4 C-C) scorpion toxin superfamily. Sodium channel inhibitor family. Beta subfamily. In terms of tissue distribution, expressed by the venom gland.

The protein resides in the secreted. In terms of biological role, beta toxins bind voltage-independently at site-4 of sodium channels (Nav) and shift the voltage of activation toward more negative potentials thereby affecting sodium channel activation and promoting spontaneous and repetitive firing. In Centruroides exilicauda (Bark scorpion), this protein is Neurotoxin Cex10.